We begin with the raw amino-acid sequence, 326 residues long: MRLWPQAWGAVRGAWRECFPLQGHDVARWFPGHMAKGLKKMQSSLKSVDCVIEVHDARIPFSGRNPLFQELLGLKPHLLVLNKMDLADLTEQQKIVQRLEEKGLSNVLFTNCVKDENIKQIVPKVMELIRCSYRYHRAETPEYCIMVVGVPNVGKSSLINSLRRQHLRTGKAARVGGEPGITRAVTSRIQVCERPLVFLLDTPGVLAPRIESVETGLKLALCGTVLDHLVGEETMADYLLYTLNRHGLFGYVQHYALASACDQIEWVLKNVAIKLRKTRKVKVLTGTGNVNVIQPDYAMAARDFLRTFRSGLLGQVMLDRDIIPAC.

The CP-type G domain maps to 35 to 208 (AKGLKKMQSS…LLDTPGVLAP (174 aa)). Residues 82 to 85 (NKMD), 152 to 157 (NVGKSS), and Gly-204 each bind GTP.

This sequence belongs to the TRAFAC class YlqF/YawG GTPase family. MTG1 subfamily. As to quaternary structure, associates with the mitochondrial ribosome large subunit; the association occurs in a GTP-dependent manner.

It is found in the mitochondrion inner membrane. In terms of biological role, plays a role in the regulation of the mitochondrial ribosome assembly and of translational activity. Displays mitochondrial GTPase activity. The chain is Mitochondrial ribosome-associated GTPase 1 (Mtg1) from Mus musculus (Mouse).